The sequence spans 188 residues: Elongation factor P (188 aa).

The residue at position 34 (K34) is an N6-(3,6-diaminohexanoyl)-5-hydroxylysine.

It belongs to the elongation factor P family. In terms of processing, may be beta-lysylated on the epsilon-amino group of Lys-34 by the combined action of EpmA and EpmB, and then hydroxylated on the C5 position of the same residue by EpmC (if this protein is present). Lysylation is critical for the stimulatory effect of EF-P on peptide-bond formation. The lysylation moiety may extend toward the peptidyltransferase center and stabilize the terminal 3-CCA end of the tRNA. Hydroxylation of the C5 position on Lys-34 may allow additional potential stabilizing hydrogen-bond interactions with the P-tRNA.

The protein resides in the cytoplasm. Its pathway is protein biosynthesis; polypeptide chain elongation. Functionally, involved in peptide bond synthesis. Alleviates ribosome stalling that occurs when 3 or more consecutive Pro residues or the sequence PPG is present in a protein, possibly by augmenting the peptidyl transferase activity of the ribosome. Modification of Lys-34 is required for alleviation. The chain is Elongation factor P from Xylella fastidiosa (strain M23).